We begin with the raw amino-acid sequence, 515 residues long: Putative cytochrome P450 CYP13A2 (515 aa).

Position 460 (cysteine 460) interacts with heme.

The protein belongs to the cytochrome P450 family. It depends on heme as a cofactor.

Functionally, cytochromes P450 are a group of heme-thiolate monooxygenases. They oxidize a variety of structurally unrelated compounds, including steroids, fatty acids, and xenobiotics. This chain is Putative cytochrome P450 CYP13A2 (cyp-13A2), found in Caenorhabditis elegans.